We begin with the raw amino-acid sequence, 134 residues long: Thyrotropin subunit beta (134 aa).

Residues 1 to 16 (MSPFFMMSLLFGLTFG) form the signal peptide. Intrachain disulfides connect Cys22-Cys72, Cys36-Cys87, Cys39-Cys125, Cys47-Cys103, Cys51-Cys105, and Cys108-Cys115. The N-linked (GlcNAc...) asparagine glycan is linked to Asn43.

Belongs to the glycoprotein hormones subunit beta family. In terms of assembly, heterodimer of a common alpha chain and a unique beta chain which confers biological specificity to thyrotropin, lutropin, follitropin and gonadotropin.

The protein resides in the secreted. Functionally, indispensable for the control of thyroid structure and metabolism. This chain is Thyrotropin subunit beta (TSHB), found in Gallus gallus (Chicken).